Reading from the N-terminus, the 652-residue chain is Thioredoxin reductase 3 (652 aa).

Positions 1 to 12 (MEKPPSPPPPPR) are enriched in pro residues. The tract at residues 1–62 (MEKPPSPPPP…TSRPSSEARE (62 aa)) is disordered. The residue at position 34 (Arg-34) is an Asymmetric dimethylarginine; alternate. Arg-34 bears the Omega-N-methylarginine; alternate mark. Ser-50 carries the phosphoserine modification. A Glutaredoxin domain is found at 65 to 165 (RRRLRDLIEG…KLLQDDSAHD (101 aa)). FAD is bound at residue 167 to 196 (DLIIIGGGSGGLSCAKEAANLGKKVMVLDF). A disulfide bridge links Cys-212 with Cys-217. Residue Lys-388 is modified to N6-succinyllysine. The active-site Proton acceptor is His-625. A cross-link (cysteinyl-selenocysteine (Cys-Sec)) is located at residues 650–651 (CU). Residue Sec-651 is a non-standard amino acid, selenocysteine.

Belongs to the class-I pyridine nucleotide-disulfide oxidoreductase family. Homodimer. It depends on FAD as a cofactor. As to expression, expressed preferentially in testis where it is found in spermatids and spermatocytes but not in sperm. In elongating spermatids, expressed at the site of mitochondrial sheath formation. Low levels in other tissues including heart, lung, liver, kidney, brain, muscle and prostate.

Its subcellular location is the cytoplasm. It localises to the nucleus. It is found in the microsome. The protein localises to the endoplasmic reticulum. The enzyme catalyses [thioredoxin]-dithiol + NADP(+) = [thioredoxin]-disulfide + NADPH + H(+). Displays thioredoxin reductase, glutaredoxin and glutathione reductase activities. Catalyzes disulfide bond isomerization. Promotes disulfide bond formation between GPX4 and various sperm proteins and may play a role in sperm maturation by promoting formation of sperm structural components. The sequence is that of Thioredoxin reductase 3 from Mus musculus (Mouse).